Here is a 253-residue protein sequence, read N- to C-terminus: Testis-expressed protein 47 (253 aa).

The polypeptide is Testis-expressed protein 47 (Rattus norvegicus (Rat)).